A 152-amino-acid polypeptide reads, in one-letter code: FMN reductase (NADH) RutF (152 aa).

It belongs to the non-flavoprotein flavin reductase family. RutF subfamily.

The catalysed reaction is FMNH2 + NAD(+) = FMN + NADH + 2 H(+). In terms of biological role, catalyzes the reduction of FMN to FMNH2 which is used to reduce pyrimidine by RutA via the Rut pathway. In Shigella dysenteriae serotype 1 (strain Sd197), this protein is FMN reductase (NADH) RutF.